The chain runs to 250 residues: 2-C-methyl-D-erythritol 4-phosphate cytidylyltransferase (250 aa).

It belongs to the IspD/TarI cytidylyltransferase family. IspD subfamily.

The catalysed reaction is 2-C-methyl-D-erythritol 4-phosphate + CTP + H(+) = 4-CDP-2-C-methyl-D-erythritol + diphosphate. It participates in isoprenoid biosynthesis; isopentenyl diphosphate biosynthesis via DXP pathway; isopentenyl diphosphate from 1-deoxy-D-xylulose 5-phosphate: step 2/6. Catalyzes the formation of 4-diphosphocytidyl-2-C-methyl-D-erythritol from CTP and 2-C-methyl-D-erythritol 4-phosphate (MEP). The polypeptide is 2-C-methyl-D-erythritol 4-phosphate cytidylyltransferase (Streptomyces avermitilis (strain ATCC 31267 / DSM 46492 / JCM 5070 / NBRC 14893 / NCIMB 12804 / NRRL 8165 / MA-4680)).